The sequence spans 260 residues: DNA repair protein RecO (260 aa).

The segment at 239-260 (SAGVAAARKAGGDGSDGDEGEQ) is disordered.

Belongs to the RecO family.

Its function is as follows. Involved in DNA repair and RecF pathway recombination. This chain is DNA repair protein RecO, found in Sodalis glossinidius (strain morsitans).